The following is a 570-amino-acid chain: Probable metalloreductase AIM14 (570 aa).

Helical transmembrane passes span 21 to 41, 70 to 90, 101 to 118, 142 to 162, 177 to 197, 204 to 224, and 230 to 250; these read IKYGYYVLIISLVYLIGLALL, AIHLGILFFAVLIPFYYHYSL, LGRLSYALIPLNLFLTLR, IITVIGLLHGIFFIIKWAIDD, FVGFIISILVLFLLICSIGPM, LFYIVHNLVNVAFILLTPIHS, and FPFLLLNCTLLFIHIINRIVF. The Ferric oxidoreductase domain occupies 101-219; the sequence is LGRLSYALIP…NLVNVAFILL (119 aa). One can recognise an FAD-binding FR-type domain in the interval 250-388; the sequence is FAKSLMILNK…GGSGISFALP (139 aa). Residues 480–507 form a disordered region; it reads ISNFNSENADSNDKTPETSHSPTKENGS.

The protein belongs to the ferric reductase (FRE) family. AIM14 subfamily. In terms of assembly, interacts with ribosomes.

It localises to the membrane. Its function is as follows. Probable cell surface metalloreductase. May be involved in iron or copper homeostasis. This Saccharomyces cerevisiae (strain JAY291) (Baker's yeast) protein is Probable metalloreductase AIM14 (AIM14).